The chain runs to 246 residues: Transcription factor MYB13 (246 aa).

HTH myb-type domains are found at residues 9 to 61 (KIGL…INYL) and 62 to 116 (RPDI…KKRL). DNA-binding regions (H-T-H motif) lie at residues 37-61 (WRALPKLAGLLRCGKSCRLRWINYL) and 89-112 (WSAIAAKLPGRTDNEIKNVWHTHL).

Expressed in roots and flowers. Expressed in shoot apex, axillary buds, at the basis of flowers and branching points of inflorescences.

The protein resides in the nucleus. Functionally, plays a regulatory role in meristem function. Functions as component of a regulatory network controlling the establishment and/or development of the shoot system by the regulation of apical meristem function. May play a role in tolerance to boric acid. The chain is Transcription factor MYB13 from Arabidopsis thaliana (Mouse-ear cress).